The following is a 153-amino-acid chain: Large ribosomal subunit protein uL22 (153 aa).

It belongs to the universal ribosomal protein uL22 family. Part of the 50S ribosomal subunit.

Functionally, this protein binds specifically to 23S rRNA. It makes multiple contacts with different domains of the 23S rRNA in the assembled 50S subunit and ribosome. Its function is as follows. The globular domain of the protein is located near the polypeptide exit tunnel on the outside of the subunit, while an extended beta-hairpin is found that lines the wall of the exit tunnel in the center of the 70S ribosome. In Methanococcus vannielii (strain ATCC 35089 / DSM 1224 / JCM 13029 / OCM 148 / SB), this protein is Large ribosomal subunit protein uL22.